We begin with the raw amino-acid sequence, 660 residues long: MSHSVSLTFPDGSVREFAPGTTGRDVAESISKSLAKKSVAIAIDGELRDLSDPVTEGRIEIVTREDKRALELIRHDAAHVMAEAVQELWPGTQVTIGPVIDNGFYYDFAKNEPFTPDDLPVIEKRMREIIARNKPFTKEVWSRDKAKEVFAVKGESYKVELVDAIPEGQDLKIYYQGDWFDLCRGPHMASTGQIGTAFKLMKVAGAYWRGDSNNPMLTRIYGTAWHTQEELDQYLHVLAEAEKRDHRRLGREMDLFHFQEEGPGVVFWHGKGWRIFQSLVAYMRRRLEGDYQEVNAPQVLDKSLWETSGHWGWYRDNMFKVTVAGDDTDDDRVFALKPMNCPGHIQIFKHGLKSYRELPVRLAEFGAVHRYEPSGALHGLMRVRGFTQDDAHIFCTDEQMAAECLKINDLILSVYEDFGFKEIVVKLSTRPEKRVGSDELWDRAEAVMTEVLKTIEAQSEGRIKTGILPGEGAFYGPKFEYTLKDAIGREWQCGTTQVDFNLPERFGAFYIDSESEKRQPVMIHRAICGSMERFLGILLENFAGHMPLWISPLQVVVATITSEADDYGREVAERLRDAGLTVETDFRNEKINYKVREHSVTKVPVIVVCGKREAEERSVNIRRLGSQAQTAMSLDEAVASLSAEATAPDLKRKAERTARA.

Positions 1 to 64 (MSHSVSLTFP…TEGRIEIVTR (64 aa)) constitute a TGS domain. Residues 245-547 (DHRRLGREMD…LLENFAGHMP (303 aa)) are catalytic. Zn(2+) contacts are provided by cysteine 341, histidine 392, and histidine 524.

This sequence belongs to the class-II aminoacyl-tRNA synthetase family. In terms of assembly, homodimer. Requires Zn(2+) as cofactor.

Its subcellular location is the cytoplasm. It catalyses the reaction tRNA(Thr) + L-threonine + ATP = L-threonyl-tRNA(Thr) + AMP + diphosphate + H(+). Catalyzes the attachment of threonine to tRNA(Thr) in a two-step reaction: L-threonine is first activated by ATP to form Thr-AMP and then transferred to the acceptor end of tRNA(Thr). Also edits incorrectly charged L-seryl-tRNA(Thr). The sequence is that of Threonine--tRNA ligase from Sinorhizobium medicae (strain WSM419) (Ensifer medicae).